A 591-amino-acid polypeptide reads, in one-letter code: NADH-quinone oxidoreductase subunit C/D (591 aa).

An NADH dehydrogenase I subunit C region spans residues 1 to 182; it reads MVTVVENIDP…TPYFLNTAKQ (182 aa). An NADH dehydrogenase I subunit D region spans residues 206–591; it reads DFMFLNIGPN…IDVVMADCDR (386 aa).

This sequence in the N-terminal section; belongs to the complex I 30 kDa subunit family. It in the C-terminal section; belongs to the complex I 49 kDa subunit family. NDH-1 is composed of 13 different subunits. Subunits NuoB, CD, E, F, and G constitute the peripheral sector of the complex.

It localises to the cell inner membrane. It catalyses the reaction a quinone + NADH + 5 H(+)(in) = a quinol + NAD(+) + 4 H(+)(out). In terms of biological role, NDH-1 shuttles electrons from NADH, via FMN and iron-sulfur (Fe-S) centers, to quinones in the respiratory chain. The immediate electron acceptor for the enzyme in this species is believed to be ubiquinone. Couples the redox reaction to proton translocation (for every two electrons transferred, four hydrogen ions are translocated across the cytoplasmic membrane), and thus conserves the redox energy in a proton gradient. This is NADH-quinone oxidoreductase subunit C/D from Psychrobacter arcticus (strain DSM 17307 / VKM B-2377 / 273-4).